The sequence spans 132 residues: Tyrosine phosphatase-like protein N2 (132 aa).

Positions 1–132 constitute a Tyrosine-protein phosphatase domain; sequence MQGPMKNTVA…DILGRFQRVF (132 aa).

It belongs to the protein-tyrosine phosphatase family.

In Microplitis demolitor (Parasitoid wasp), this protein is Tyrosine phosphatase-like protein N2 (N4).